The chain runs to 940 residues: Lon protease homolog 1, mitochondrial (940 aa).

The transit peptide at 1 to 61 (MLKLFTSSAS…AFFCSEPTNG (61 aa)) directs the protein to the mitochondrion. Positions 70–90 (KAVESDSEVSDSKSSSAIVPT) are disordered. The residue at position 74 (Ser74) is a Phosphoserine. Residues 100 to 309 (VLALPVPHRP…LTLELMKKEM (210 aa)) enclose the Lon N-terminal domain. ATP is bound at residue 464–471 (GPPGVGKT). The region spanning 751–935 (QTPVGVVMGL…GKIFELAFGY (185 aa)) is the Lon proteolytic domain. Catalysis depends on residues Ser841 and Lys884.

Belongs to the peptidase S16 family. In terms of assembly, homohexamer or homoheptamer. Organized in a ring with a central cavity.

It is found in the mitochondrion matrix. The enzyme catalyses Hydrolysis of proteins in presence of ATP.. ATP-dependent serine protease that mediates the selective degradation of misfolded, unassembled or oxidatively damaged polypeptides as well as certain short-lived regulatory proteins in the mitochondrial matrix. May also have a chaperone function in the assembly of inner membrane protein complexes. Participates in the regulation of mitochondrial gene expression and in the maintenance of the integrity of the mitochondrial genome. Binds to mitochondrial DNA in a site-specific manner. The sequence is that of Lon protease homolog 1, mitochondrial (LON1) from Arabidopsis thaliana (Mouse-ear cress).